We begin with the raw amino-acid sequence, 235 residues long: Large ribosomal subunit protein uL1c (235 aa).

This sequence belongs to the universal ribosomal protein uL1 family. As to quaternary structure, part of the 50S ribosomal subunit.

The protein localises to the plastid. Its subcellular location is the chloroplast. Its function is as follows. Binds directly to 23S rRNA. Might be involved in E site tRNA release (Potential). In Gracilaria tenuistipitata var. liui (Red alga), this protein is Large ribosomal subunit protein uL1c (rpl1).